We begin with the raw amino-acid sequence, 465 residues long: Botryococcus squalene synthase (465 aa).

Residues Arg-48 and Arg-73 each coordinate NADP(+). 3 residues coordinate Mg(2+): Asp-76, Glu-79, and Asp-80. Residues Arg-215, Lys-315, and Arg-317 each coordinate NADP(+). 2 consecutive transmembrane segments (helical) span residues 395 to 415 (AIRL…FNLG) and 429 to 449 (ILDL…LLVL).

The protein belongs to the phytoene/squalene synthase family.

It is found in the membrane. It carries out the reaction presqualene diphosphate + NADPH + H(+) = squalene + diphosphate + NADP(+). In terms of biological role, produces squalene when coexpressed with SSL-1 and bisfarnesyl ether and a very small amount of squalene when incubated alone in the presence of NADPH. This Botryococcus braunii (Green alga) protein is Botryococcus squalene synthase (SSL-2).